The primary structure comprises 429 residues: MQFKNALTATAILSASALAANSTTSIPSSCSIGTSATATAQADLDKISGCSTIVGNLTITGDLGSAALASIQEIDGSLTIFNSSSLSSFSADSIKKITGDLNMQELIILTSASFGSLQEVDSINMVTLPAISTFSTDLQNANNIIVSDTTLESVEGFSTLKKVNVFNINNNRYLNSFQSSLESVSDSLQFSSNGDNTTLAFDNLVWANNITLRDVNSISFGSLQTVNASLGFINNTLPSLNLTQLSKVGQSLSIVSNDELSKAAFSNLTTVGGGFIIANNTQLKVIDGFNKVQTVGGAIEVTGNFSTLDLSSLKSVRGGANFDSSSSNFSCNALKKLQSNGAIQGDSFVCKNGATSTSVKLSSTSTESSKSSATSSASSSGDASNAQANVSASASSSSSSSKKSKGAAPELVPATSFMGVVAAVGVALL.

The signal sequence occupies residues 1 to 19 (MQFKNALTATAILSASALA). Asparagine 21, asparagine 56, asparagine 82, asparagine 196, asparagine 209, asparagine 227, asparagine 234, asparagine 241, asparagine 267, asparagine 279, asparagine 304, and asparagine 328 each carry an N-linked (GlcNAc...) asparagine glycan. The residue at position 339 (serine 339) is a Phosphoserine. A compositionally biased stretch (low complexity) spans 361 to 401 (LSSTSTESSKSSATSSASSSGDASNAQANVSASASSSSSSS). A disordered region spans residues 361–410 (LSSTSTESSKSSATSSASSSGDASNAQANVSASASSSSSSSKKSKGAAPE). An N-linked (GlcNAc...) asparagine glycan is attached at asparagine 389. Residue glycine 406 is the site of GPI-anchor amidated glycine attachment. The propeptide at 407–429 (AAPELVPATSFMGVVAAVGVALL) is removed in mature form.

Belongs to the SPS2 family. The GPI-anchor is attached to the protein in the endoplasmic reticulum and serves to target the protein to the cell surface. There, the glucosamine-inositol phospholipid moiety is cleaved off and the GPI-modified mannoprotein is covalently attached via its lipidless GPI glycan remnant to the 1,6-beta-glucan of the outer cell wall layer. In terms of processing, extensively N-glycosylated.

The protein resides in the cell membrane. Its subcellular location is the secreted. It localises to the cell wall. Its function is as follows. Required for proper cell wall integrity and for the correct assembly of the mannoprotein outer layer of the cell wall. Important for apical bud growth. This Saccharomyces cerevisiae (strain ATCC 204508 / S288c) (Baker's yeast) protein is Cell wall protein ECM33 (ECM33).